A 213-amino-acid polypeptide reads, in one-letter code: 24 kDa ookinete surface protein (213 aa).

Positions 1–28 are cleaved as a signal peptide; that stretch reads MNFKYSFIFLFFIQLAIRYNNAKITVDT. Residues 30-59 enclose the EGF-like 1; truncated domain; that stretch reads CKGGKLIQMSNHYECKCPSGYALKTENTCE. EGF-like domains are found at residues 60–108 and 108–148; these read PIVK…NICK and KPTR…GKCT. 6 disulfides stabilise this stretch: C64–C80, C74–C94, C96–C107, C112–C122, C117–C134, and C136–C147. The region spanning 151–175 is the EGF-like 4; truncated domain; it reads GETKCLLKCKAAEECKLTGKHYECV. N190 is lipidated: GPI-anchor amidated asparagine. N190 carries an N-linked (GlcNAc...) asparagine glycan. A propeptide spans 191–213 (removed in mature form); that stretch reads SSFMNGMSIISIIALLVIYVIVM.

It localises to the cell membrane. This chain is 24 kDa ookinete surface protein, found in Plasmodium berghei (strain Anka).